A 299-amino-acid polypeptide reads, in one-letter code: Bifunctional protein FolD (299 aa).

NADP(+) contacts are provided by residues 164–166 and I234; that span reads GRS.

The protein belongs to the tetrahydrofolate dehydrogenase/cyclohydrolase family. In terms of assembly, homodimer.

It carries out the reaction (6R)-5,10-methylene-5,6,7,8-tetrahydrofolate + NADP(+) = (6R)-5,10-methenyltetrahydrofolate + NADPH. The catalysed reaction is (6R)-5,10-methenyltetrahydrofolate + H2O = (6R)-10-formyltetrahydrofolate + H(+). It functions in the pathway one-carbon metabolism; tetrahydrofolate interconversion. Functionally, catalyzes the oxidation of 5,10-methylenetetrahydrofolate to 5,10-methenyltetrahydrofolate and then the hydrolysis of 5,10-methenyltetrahydrofolate to 10-formyltetrahydrofolate. In Christiangramia forsetii (strain DSM 17595 / CGMCC 1.15422 / KT0803) (Gramella forsetii), this protein is Bifunctional protein FolD.